Reading from the N-terminus, the 211-residue chain is Beta-crystallin B3 (211 aa).

A disordered region spans residues 1 to 21 (MTEQQSPPEQMVTGEGAGERG). Positions 1–23 (MTEQQSPPEQMVTGEGAGERGGN) are N-terminal arm. Beta/gamma crystallin 'Greek key' domains are found at residues 24 to 63 (YKIT…QVES) and 64 to 108 (GPWL…RPLQ). The tract at residues 109-113 (IDSPD) is connecting peptide. Beta/gamma crystallin 'Greek key' domains follow at residues 114–155 (HKIH…RALN) and 156–198 (GTWV…RRVR). Positions 200 to 211 (QQWHQRGSFENS) are C-terminal arm.

Belongs to the beta/gamma-crystallin family. As to quaternary structure, homo/heterodimer, or complexes of higher-order. The structure of beta-crystallin oligomers seems to be stabilized through interactions between the N-terminal arms.

Crystallins are the dominant structural components of the vertebrate eye lens. This is Beta-crystallin B3 (CRYBB3) from Gallus gallus (Chicken).